The primary structure comprises 142 residues: RNA polymerase-binding transcription factor DksA (142 aa).

Disordered stretches follow at residues 1-20 (MQTA…EDEP), 51-70 (HLQK…SSET), and 119-142 (RPTA…HRDD). Residues 104–128 (CEETGEPIGLARLEARPTATMSVEA) form a dksA C4-type zinc finger. The span at 128–142 (AQERHERRERVHRDD) shows a compositional bias: basic and acidic residues.

Belongs to the DksA family. Interacts directly with the RNA polymerase.

It is found in the cytoplasm. Functionally, transcription factor that acts by binding directly to the RNA polymerase (RNAP). Required for negative regulation of rRNA expression and positive regulation of several amino acid biosynthesis promoters. The protein is RNA polymerase-binding transcription factor DksA of Caulobacter vibrioides (strain ATCC 19089 / CIP 103742 / CB 15) (Caulobacter crescentus).